The following is a 335-amino-acid chain: Glycerol-3-phosphate dehydrogenase [NAD(P)+] (335 aa).

NADPH is bound by residues Ser15, Tyr16, His36, and Lys110. Sn-glycerol 3-phosphate contacts are provided by Lys110, Gly139, and Thr141. Ala143 contributes to the NADPH binding site. Sn-glycerol 3-phosphate-binding residues include Lys195, Asp248, Ser258, Arg259, and Asn260. Lys195 acts as the Proton acceptor in catalysis. Arg259 provides a ligand contact to NADPH. 2 residues coordinate NADPH: Val283 and Glu285.

This sequence belongs to the NAD-dependent glycerol-3-phosphate dehydrogenase family.

Its subcellular location is the cytoplasm. The enzyme catalyses sn-glycerol 3-phosphate + NAD(+) = dihydroxyacetone phosphate + NADH + H(+). The catalysed reaction is sn-glycerol 3-phosphate + NADP(+) = dihydroxyacetone phosphate + NADPH + H(+). The protein operates within membrane lipid metabolism; glycerophospholipid metabolism. In terms of biological role, catalyzes the reduction of the glycolytic intermediate dihydroxyacetone phosphate (DHAP) to sn-glycerol 3-phosphate (G3P), the key precursor for phospholipid synthesis. The protein is Glycerol-3-phosphate dehydrogenase [NAD(P)+] of Mannheimia succiniciproducens (strain KCTC 0769BP / MBEL55E).